The following is a 178-amino-acid chain: Napin-B (178 aa).

A signal peptide spans 1-21 (MANKLFLVSATLAFFFLLTNA). 2 consecutive propeptides follow at residues 22 to 38 (SIYR…ATNP) and 75 to 94 (PSWT…NPQG).

This sequence belongs to the 2S seed storage albumins family. In terms of assembly, the mature protein consists of a small and a large chain linked by disulfide bonds. In terms of tissue distribution, cotyledons and the axis.

In terms of biological role, the small, basic, water-soluble napins are one of the two major kinds of storage proteins synthesized in the seed during its maturation. In Brassica napus (Rape), this protein is Napin-B (NAPB).